A 201-amino-acid chain; its full sequence is Zinc finger protein 239 (201 aa).

7 consecutive C2H2-type zinc fingers follow at residues 6-28 (YKCDKCGKGFTRSSSLLVHHSVH), 34-56 (FKCDRCGKGFSQSSKLHIHKRVH), 62-84 (YACEECGMSFSQRSNLHIHQRVH), 90-112 (YKCGECGKGFSQSSNLHIHRCTH), 118-140 (YQCYECGKGFSQSSDLRIHLRVH), 146-168 (YHCGKCGQGFSQSSKLLIHQRVH), and 174-196 (YECSKCGKGFSQSSNLHIHQRVH).

It belongs to the krueppel C2H2-type zinc-finger protein family. In terms of tissue distribution, preferentially expressed in transformed mouse cells.

Its subcellular location is the nucleus. Functionally, may be involved in transcriptional regulation. This is Zinc finger protein 239 (Znf239) from Mus musculus (Mouse).